A 520-amino-acid chain; its full sequence is Ribonuclease Y (520 aa).

Residues 1–3 (MTP) are Extracellular-facing. A helical membrane pass occupies residues 4–24 (IMMVLISILLILLGLVVGYFV). Residues 25–520 (RKTIAEAKIA…RETRAVEYAK (496 aa)) lie on the Cytoplasmic side of the membrane. Residues 29 to 141 (AEAKIAGARG…KVDEMIRMQQ (113 aa)) adopt a coiled-coil conformation. In terms of domain architecture, KH spans 210–273 (TVSVVNLPND…ETARIALDKL (64 aa)). The HD domain maps to 336–429 (VLKHSMEVAF…VAAADALSAA (94 aa)).

This sequence belongs to the RNase Y family. In terms of assembly, homodimer. Component of a possible RNA degradosome complex composed of rny, rnjA, rnjB, pnp, pfkA and eno (although rnjA and rnjB's presence is unclear). Interacts with RNA helicase CshA which may also be a member of the RNA degradosome complex. Interacts with full-length dynamin-like protein DynA. It depends on Mg(2+) as a cofactor. Requires Mn(2+) as cofactor. Zn(2+) serves as cofactor.

The protein resides in the cell membrane. Its activity is regulated as follows. Shows preference for transcripts carrying a monophosphate group at the 5' end. In terms of biological role, endoribonuclease that initiates mRNA decay. Initiates the decay of all SAM-dependent riboswitches, such as yitJ riboswitch. Involved in processing of the gapA operon mRNA, it cleaves between cggR and gapA. Is also the decay-initiating endonuclease for rpsO mRNA. Involved in degradation of type I toxin-antitoxin system bsrG/SR4 RNAs and a minor role in degradation of type I toxin-antitoxin system bsrE/SR5 degradation. This is Ribonuclease Y (rny) from Bacillus subtilis (strain 168).